The sequence spans 510 residues: NAD(P)H-quinone oxidoreductase subunit 2 B, chloroplastic (510 aa).

The next 13 helical transmembrane spans lie at 24–44, 57–77, 99–119, 124–144, 149–169, 183–203, 227–247, 295–315, 323–343, 354–374, 395–415, 418–438, and 482–502; these read LLLF…GLIL, ISWF…VLLF, IFQF…VEYI, MAIT…MFLC, LITI…LSGY, YLLM…WLYG, PGIS…LSLA, WHLL…LIAI, MLAY…IVGD, YMLF…SFGL, ALSL…AGFF, LYLF…IGLL, and LSMI…NPII.

It belongs to the complex I subunit 2 family. NDH is composed of at least 16 different subunits, 5 of which are encoded in the nucleus.

The protein resides in the plastid. It is found in the chloroplast thylakoid membrane. It carries out the reaction a plastoquinone + NADH + (n+1) H(+)(in) = a plastoquinol + NAD(+) + n H(+)(out). The enzyme catalyses a plastoquinone + NADPH + (n+1) H(+)(in) = a plastoquinol + NADP(+) + n H(+)(out). Its function is as follows. NDH shuttles electrons from NAD(P)H:plastoquinone, via FMN and iron-sulfur (Fe-S) centers, to quinones in the photosynthetic chain and possibly in a chloroplast respiratory chain. The immediate electron acceptor for the enzyme in this species is believed to be plastoquinone. Couples the redox reaction to proton translocation, and thus conserves the redox energy in a proton gradient. This Lotus japonicus (Lotus corniculatus var. japonicus) protein is NAD(P)H-quinone oxidoreductase subunit 2 B, chloroplastic.